Here is a 297-residue protein sequence, read N- to C-terminus: D-alanine--D-alanine ligase (297 aa).

Residues 95-294 form the ATP-grasp domain; it reads KMLWKAFGLP…FEQLVVKILE (200 aa). Residue 125-180 participates in ATP binding; sequence VAKLGLPLMVKPSLEGSSVGLTKVKAVEELKSAVEYALKFDNTILIEEWLAGDELT. The Mg(2+) site is built by D248, E261, and N263.

Belongs to the D-alanine--D-alanine ligase family. Requires Mg(2+) as cofactor. Mn(2+) serves as cofactor.

The protein resides in the cytoplasm. The enzyme catalyses 2 D-alanine + ATP = D-alanyl-D-alanine + ADP + phosphate + H(+). The protein operates within cell wall biogenesis; peptidoglycan biosynthesis. Cell wall formation. The polypeptide is D-alanine--D-alanine ligase (Haemophilus influenzae (strain PittEE)).